Here is a 337-residue protein sequence, read N- to C-terminus: DNA-directed RNA polymerase subunit alpha (337 aa).

Residues 1 to 233 (MVREKVKVST…NLFIPFLHVE (233 aa)) are alpha N-terminal domain (alpha-NTD). The alpha C-terminal domain (alpha-CTD) stretch occupies residues 267–337 (LAFQYIFIDQ…IEKAFQKKID (71 aa)).

This sequence belongs to the RNA polymerase alpha chain family. In plastids the minimal PEP RNA polymerase catalytic core is composed of four subunits: alpha, beta, beta', and beta''. When a (nuclear-encoded) sigma factor is associated with the core the holoenzyme is formed, which can initiate transcription.

The protein localises to the plastid. It localises to the chloroplast. It carries out the reaction RNA(n) + a ribonucleoside 5'-triphosphate = RNA(n+1) + diphosphate. In terms of biological role, DNA-dependent RNA polymerase catalyzes the transcription of DNA into RNA using the four ribonucleoside triphosphates as substrates. This chain is DNA-directed RNA polymerase subunit alpha, found in Arabis hirsuta (Hairy rock-cress).